Consider the following 918-residue polypeptide: Importin subunit beta-2 (918 aa).

HEAT repeat units follow at residues 11-38 (YVLQ…EAME), 43-92 (QPEF…GGNN), 103-137 (YVKS…TYYR), 145-181 (GLQM…FQLE), 190-222 (EALL…TVIP), 235-263 (FLEI…SFLL), 275-303 (DGIV…FLHA), 320-413 (KDIV…MTNI), 421-449 (IAFP…GAMA), 461-488 (PALI…TLSR), 501-534 (LIPV…IENA), 542-577 (LFYS…AEKC), 583-620 (AMQI…SSLG), 628-678 (PEVY…GLGA), 694-725 (ILKI…YFFN), 777-814 (IDMS…LTHP), 825-858 (DSNW…INLT), and 867-900 (DTIH…SAQI). The segment at 361–395 (APRIVKKKEAGNGEDADDNEDDDDDDDDEDGDVDT) is disordered. The segment covering 372 to 393 (NGEDADDNEDDDDDDDDEDGDV) has biased composition (acidic residues).

It belongs to the importin beta family. Importin beta-2 subfamily. Interacts with Ran (GSP1); interacts specifically with the GTP-bound form of Ran (GTP-Ran), protecting it from GTP hydrolysis and nucleotide exchange. Interacts with nucleoporins NUP1, NUP100 and NUP116. Interacts with NAB2 and HRP1/NAB4; via their rg-NLS. Interacts with TFG2; via its PY-NLS.

The protein resides in the cytoplasm. It is found in the nucleus. Its subcellular location is the nuclear pore complex. In terms of biological role, functions in nuclear protein import as nuclear transport receptor. Serves as receptor for arginine/glycine-rich nuclear localization signals (rg-NLS) and PY-NLS in cargo substrates. Its predominant cargo substrate seems to be mRNA-binding proteins. Required for nuclear transport of NAB2, HRP1/NAB4 and TFG2. Mediates docking of the importin/substrate complex to the nuclear pore complex (NPC) through binding to repeat-containing nucleoporins. The complex is subsequently translocated through the pore by an energy requiring, Ran-dependent mechanism. At the nucleoplasmic side of the NPC, GTP-Ran binding leads to release of the cargo. Efficient GTP-Ran-mediated substrate release requires RNA. The importin is re-exported from the nucleus to the cytoplasm where GTP hydrolysis releases Ran from importin. The directionality of nuclear import is thought to be conferred by an asymmetric distribution of the GTP- and GDP-bound forms of Ran between the cytoplasm and nucleus. The sequence is that of Importin subunit beta-2 from Saccharomyces cerevisiae (strain ATCC 204508 / S288c) (Baker's yeast).